We begin with the raw amino-acid sequence, 317 residues long: Ubiquinone biosynthesis protein COQ9-A, mitochondrial (317 aa).

Residues Met1–Arg46 constitute a mitochondrion transit peptide. The interval Gln50–Gln97 is disordered. Residues Pro53–Glu63 are compositionally biased toward polar residues. The span at Ala85–Glu96 shows a compositional bias: acidic residues. Arg243 serves as a coordination point for a 1,2-diacylglycero-3-phosphoethanolamine.

It belongs to the COQ9 family. As to quaternary structure, homodimer. Heterodimer; two heterodimers of COQ7:COQ9 come together on the same side of the lipid pseudo-bilayer and form a curved tetramer with a hydrophobic surface suitable for membrane interaction. These two tetramers assemble into a soluble octamer with a pseudo-bilayer of lipids captured within. Interacts with COQ7; this interaction allows ubiquinone (CoQ) isoprene intermediates presentation to COQ7 and facilitates the COQ7-mediated hydroxylase step.

It localises to the mitochondrion. Its pathway is cofactor biosynthesis; ubiquinone biosynthesis. Membrane-associated protein that warps the membrane surface to access and bind aromatic isoprenes with high specificity, including ubiquinone (CoQ) isoprene intermediates and presents them directly to COQ7, therefore facilitating the COQ7-mediated hydroxylase step. Participates in the biosynthesis of coenzyme Q, also named ubiquinone, an essential lipid-soluble electron transporter for aerobic cellular respiration. The polypeptide is Ubiquinone biosynthesis protein COQ9-A, mitochondrial (coq9-a) (Xenopus laevis (African clawed frog)).